The primary structure comprises 130 residues: Small ribosomal subunit protein uS9 (130 aa).

It belongs to the universal ribosomal protein uS9 family.

This chain is Small ribosomal subunit protein uS9, found in Vibrio campbellii (strain ATCC BAA-1116).